A 438-amino-acid chain; its full sequence is 23S rRNA (uracil(1939)-C(5))-methyltransferase RlmD (438 aa).

The TRAM domain maps to 4–68 (FYTPGRRTAT…RHFARGRVTR (65 aa)). 4 residues coordinate [4Fe-4S] cluster: Cys-81, Cys-87, Cys-90, and Cys-167. S-adenosyl-L-methionine is bound by residues Gln-269, Phe-298, Asn-303, Glu-319, Asn-346, and Asp-367. Cys-393 functions as the Nucleophile in the catalytic mechanism.

It belongs to the class I-like SAM-binding methyltransferase superfamily. RNA M5U methyltransferase family. RlmD subfamily.

The enzyme catalyses uridine(1939) in 23S rRNA + S-adenosyl-L-methionine = 5-methyluridine(1939) in 23S rRNA + S-adenosyl-L-homocysteine + H(+). In terms of biological role, catalyzes the formation of 5-methyl-uridine at position 1939 (m5U1939) in 23S rRNA. In Edwardsiella ictaluri (strain 93-146), this protein is 23S rRNA (uracil(1939)-C(5))-methyltransferase RlmD.